Reading from the N-terminus, the 265-residue chain is Small ribosomal subunit protein uS2 (265 aa).

It belongs to the universal ribosomal protein uS2 family.

The polypeptide is Small ribosomal subunit protein uS2 (Gluconobacter oxydans (strain 621H) (Gluconobacter suboxydans)).